We begin with the raw amino-acid sequence, 239 residues long: AA9 family lytic polysaccharide monooxygenase C (239 aa).

H1 is a Cu(2+) binding site. A disulfide bridge connects residues C39 and C190. The N-linked (GlcNAc...) asparagine glycan is linked to N75. H84 is a Cu(2+) binding site. N135 carries an N-linked (GlcNAc...) asparagine glycan. 2 residues coordinate O2: H157 and Q166. Y168 is a binding site for Cu(2+). N194 and N229 each carry an N-linked (GlcNAc...) asparagine glycan.

It belongs to the polysaccharide monooxygenase AA9 family. The cofactor is Cu(2+).

Its subcellular location is the secreted. The enzyme catalyses [(1-&gt;4)-beta-D-glucosyl]n+m + reduced acceptor + O2 = 4-dehydro-beta-D-glucosyl-[(1-&gt;4)-beta-D-glucosyl]n-1 + [(1-&gt;4)-beta-D-glucosyl]m + acceptor + H2O.. Its function is as follows. Lytic polysaccharide monooxygenase (LPMO) that depolymerizes crystalline and amorphous polysaccharides via the oxidation of scissile alpha- or beta-(1-4)-glycosidic bonds, yielding C1 or C4 oxidation products. Catalysis by LPMOs requires the reduction of the active-site copper from Cu(II) to Cu(I) by a reducing agent and H(2)O(2) or O(2) as a cosubstrate. The chain is AA9 family lytic polysaccharide monooxygenase C from Gloeophyllum trabeum (Brown rot fungus).